The following is a 192-amino-acid chain: UPF0149 protein VIBHAR_03551 (192 aa).

Belongs to the UPF0149 family.

The protein is UPF0149 protein VIBHAR_03551 of Vibrio campbellii (strain ATCC BAA-1116).